The chain runs to 269 residues: MERYETLFAQLKNRQEGAFVPFVTLGDPGPEQSLKIIDALIEGGADALELGIPFSDPLADGPTIQGAALRAFAAGVTPAQCFEMLAAIRQKHPTIPIGLLMYANLVFSPGIDAFYAQCARVGVDSVLVADVPVEESAPFRQAAMRHNIAPIFICPPNADDDLLRQIASYGRGYTYLLSRAGVTGAENRAALPLHHLVEKLAEYHAAPPLQGFGISAPEQVSAAIDAGAAGAISGSAIVKIIERHLDEPQTMLDELKAFVQSLKAATKTA.

Catalysis depends on proton acceptor residues glutamate 49 and aspartate 60.

Belongs to the TrpA family. As to quaternary structure, tetramer of two alpha and two beta chains.

The enzyme catalyses (1S,2R)-1-C-(indol-3-yl)glycerol 3-phosphate + L-serine = D-glyceraldehyde 3-phosphate + L-tryptophan + H2O. It functions in the pathway amino-acid biosynthesis; L-tryptophan biosynthesis; L-tryptophan from chorismate: step 5/5. Functionally, the alpha subunit is responsible for the aldol cleavage of indoleglycerol phosphate to indole and glyceraldehyde 3-phosphate. The polypeptide is Tryptophan synthase alpha chain (Klebsiella aerogenes (Enterobacter aerogenes)).